The following is a 134-amino-acid chain: Phosphoribosyl-ATP pyrophosphatase (134 aa).

This sequence belongs to the PRA-PH family.

It localises to the cytoplasm. The enzyme catalyses 1-(5-phospho-beta-D-ribosyl)-ATP + H2O = 1-(5-phospho-beta-D-ribosyl)-5'-AMP + diphosphate + H(+). Its pathway is amino-acid biosynthesis; L-histidine biosynthesis; L-histidine from 5-phospho-alpha-D-ribose 1-diphosphate: step 2/9. The protein is Phosphoribosyl-ATP pyrophosphatase of Verminephrobacter eiseniae (strain EF01-2).